Consider the following 259-residue polypeptide: 7-cyano-7-deazaguanine synthase (259 aa).

Residue 32 to 42 (LSGGLDSVTCL) participates in ATP binding. 4 residues coordinate Zn(2+): cysteine 223, cysteine 233, cysteine 236, and cysteine 239.

It belongs to the QueC family. It depends on Zn(2+) as a cofactor.

The catalysed reaction is 7-carboxy-7-deazaguanine + NH4(+) + ATP = 7-cyano-7-deazaguanine + ADP + phosphate + H2O + H(+). It functions in the pathway purine metabolism; 7-cyano-7-deazaguanine biosynthesis. Functionally, catalyzes the ATP-dependent conversion of 7-carboxy-7-deazaguanine (CDG) to 7-cyano-7-deazaguanine (preQ(0)). This Psychrobacter cryohalolentis (strain ATCC BAA-1226 / DSM 17306 / VKM B-2378 / K5) protein is 7-cyano-7-deazaguanine synthase.